Reading from the N-terminus, the 118-residue chain is Immunoglobulin heavy variable 4-30-2 (118 aa).

The N-terminal stretch at 1–19 is a signal peptide; the sequence is MKHLWFFLLLVAAPRWVLS. A framework-1 region spans residues 20–44; it reads QLQLQESGSGLVKPSQTLSLTCAVS. An Ig-like domain is found at 20–118; sequence QLQLQESGSG…ADTAVYYCAR (99 aa). C41 and C116 are joined by a disulfide. The segment at 45–54 is complementarity-determining-1; that stretch reads GGSISSGGYS. Residues 55–71 form a framework-2 region; the sequence is WSWIRQPPGKGLEWIGY. The tract at residues 72–78 is complementarity-determining-2; it reads IYHSGST. Positions 79–116 are framework-3; that stretch reads YYNPSLKSRVTISVDRSKNQFSLKLSSVTAADTAVYYC. The segment at 117 to 118 is complementarity-determining-3; sequence AR.

As to quaternary structure, immunoglobulins are composed of two identical heavy chains and two identical light chains; disulfide-linked.

It localises to the secreted. Its subcellular location is the cell membrane. Functionally, v region of the variable domain of immunoglobulin heavy chains that participates in the antigen recognition. Immunoglobulins, also known as antibodies, are membrane-bound or secreted glycoproteins produced by B lymphocytes. In the recognition phase of humoral immunity, the membrane-bound immunoglobulins serve as receptors which, upon binding of a specific antigen, trigger the clonal expansion and differentiation of B lymphocytes into immunoglobulins-secreting plasma cells. Secreted immunoglobulins mediate the effector phase of humoral immunity, which results in the elimination of bound antigens. The antigen binding site is formed by the variable domain of one heavy chain, together with that of its associated light chain. Thus, each immunoglobulin has two antigen binding sites with remarkable affinity for a particular antigen. The variable domains are assembled by a process called V-(D)-J rearrangement and can then be subjected to somatic hypermutations which, after exposure to antigen and selection, allow affinity maturation for a particular antigen. This is Immunoglobulin heavy variable 4-30-2 from Homo sapiens (Human).